The following is a 114-amino-acid chain: Large ribosomal subunit protein bL21 (114 aa).

The protein belongs to the bacterial ribosomal protein bL21 family. Part of the 50S ribosomal subunit. Contacts protein L20.

Functionally, this protein binds to 23S rRNA in the presence of protein L20. This chain is Large ribosomal subunit protein bL21, found in Protochlamydia amoebophila (strain UWE25).